A 135-amino-acid chain; its full sequence is Cytochrome b-c1 complex subunit 6, mitochondrial (135 aa).

Positions 1 to 70 (MSFFRDLLES…ETADPLDTLR (70 aa)) are disordered. The span at 19 to 64 (EPVEDVEVEQPEDAPEEEVSEETVEEEEDDDEDDDEDDEEEEETAD) shows a compositional bias: acidic residues.

The protein belongs to the UQCRH/QCR6 family. As to quaternary structure, component of the ubiquinol-cytochrome c oxidoreductase (cytochrome b-c1 complex, complex III, CIII), a multisubunit enzyme composed of 10 subunits. The complex is composed of 3 respiratory subunits cytochrome b (COB), cytochrome c1 (CYT1) and Rieske protein (RIP1), 2 core protein subunits COR1 and QCR2, and 5 low-molecular weight protein subunits QCR6, QCR7, QCR8, QCR9 and QCR10. The complex exists as an obligatory dimer and forms supercomplexes (SCs) in the inner mitochondrial membrane with a monomer or a dimer of cytochrome c oxidase (complex IV, CIV), resulting in 2 different assemblies (supercomplexes III(2)IV and III(2)IV(2)).

The protein resides in the mitochondrion inner membrane. Functionally, component of the ubiquinol-cytochrome c oxidoreductase, a multisubunit transmembrane complex that is part of the mitochondrial electron transport chain which drives oxidative phosphorylation. The complex plays an important role in the uptake of multiple carbon sources present in different host niches. This chain is Cytochrome b-c1 complex subunit 6, mitochondrial, found in Candida albicans (strain SC5314 / ATCC MYA-2876) (Yeast).